Reading from the N-terminus, the 337-residue chain is Ral GTPase-activating protein subunit alpha-1 (337 aa).

As to quaternary structure, component of the heterodimeric RalGAP1 complex with RALGAPB. Heterodimerization is required for activity. Interacts with the HLH region of TCF3/isoform E12.

The protein resides in the cytoplasm. It localises to the nucleus. Its function is as follows. Catalytic subunit of the heterodimeric RalGAP1 complex which acts as a GTPase activator for the Ras-like small GTPases RALA and RALB. This chain is Ral GTPase-activating protein subunit alpha-1, found in Sus scrofa (Pig).